A 476-amino-acid polypeptide reads, in one-letter code: ATP synthase subunit beta (476 aa).

152-159 is a binding site for ATP; sequence GGAGVGKT.

Belongs to the ATPase alpha/beta chains family. As to quaternary structure, F-type ATPases have 2 components, CF(1) - the catalytic core - and CF(0) - the membrane proton channel. CF(1) has five subunits: alpha(3), beta(3), gamma(1), delta(1), epsilon(1). CF(0) has three main subunits: a(1), b(2) and c(9-12). The alpha and beta chains form an alternating ring which encloses part of the gamma chain. CF(1) is attached to CF(0) by a central stalk formed by the gamma and epsilon chains, while a peripheral stalk is formed by the delta and b chains.

The protein resides in the cell inner membrane. It catalyses the reaction ATP + H2O + 4 H(+)(in) = ADP + phosphate + 5 H(+)(out). In terms of biological role, produces ATP from ADP in the presence of a proton gradient across the membrane. The catalytic sites are hosted primarily by the beta subunits. This chain is ATP synthase subunit beta, found in Granulibacter bethesdensis (strain ATCC BAA-1260 / CGDNIH1).